The primary structure comprises 580 residues: Pentatricopeptide repeat-containing protein At5g10690 (580 aa).

PPR repeat units follow at residues N76–G110, D112–G142, S151–L181, S189–P223, D224–K254, D266–C296, D302–E337, K342–S376, and Q382–P417. A CBS domain is found at V486–G553.

The protein belongs to the PPR family. P subfamily.

In Arabidopsis thaliana (Mouse-ear cress), this protein is Pentatricopeptide repeat-containing protein At5g10690 (CBSPPR1).